We begin with the raw amino-acid sequence, 160 residues long: MKLNELRDNEGAARKKKRVARGPGSGKGKTAGRGIKGQKSRSGVALNGYEGGQMPLYRRLPKRGFSKPNRKEYAVVNLGLIQKFVDAGKLDASQPIDENAIVAAGVTSHKRDGIRVLAKGEITAKLTLTVAGASKSAVEAVEKAGGSITLTAPAAAASAE.

A compositionally biased stretch (basic and acidic residues) spans 1 to 13 (MKLNELRDNEGAA). Positions 1–51 (MKLNELRDNEGAARKKKRVARGPGSGKGKTAGRGIKGQKSRSGVALNGYEG) are disordered. The span at 23–35 (PGSGKGKTAGRGI) shows a compositional bias: gly residues.

The protein belongs to the universal ribosomal protein uL15 family. Part of the 50S ribosomal subunit.

In terms of biological role, binds to the 23S rRNA. The chain is Large ribosomal subunit protein uL15 from Cereibacter sphaeroides (strain ATCC 17025 / ATH 2.4.3) (Rhodobacter sphaeroides).